A 440-amino-acid chain; its full sequence is Adenylyltransferase and sulfurtransferase UBA4 (440 aa).

Residue Met1 is modified to N-acetylmethionine. Residues Gly77, Asp98, 105-109 (SNLHR), Lys122, and 166-167 (DS) each bind ATP. Residues Cys208 and Cys211 each contribute to the Zn(2+) site. The Glycyl thioester intermediate; for adenylyltransferase activity role is filled by Cys225. Residues Cys286 and Cys289 each contribute to the Zn(2+) site. Ser326 bears the Phosphoserine mark. The Rhodanese domain maps to 339–438 (FLAKHIFLDV…YIDDIDQTIP (100 aa)). Cys397 acts as the Cysteine persulfide intermediate; for sulfurtransferase activity in catalysis.

It in the N-terminal section; belongs to the HesA/MoeB/ThiF family. UBA4 subfamily. Zn(2+) serves as cofactor.

The protein localises to the cytoplasm. Its subcellular location is the cytosol. It participates in tRNA modification; 5-methoxycarbonylmethyl-2-thiouridine-tRNA biosynthesis. In terms of biological role, plays a central role in 2-thiolation of mcm(5)S(2)U at tRNA wobble positions of cytosolic tRNA(Lys), tRNA(Glu) and tRNA(Gln). Acts by mediating the C-terminal thiocarboxylation of sulfur carrier URM1. Its N-terminus first activates URM1 as acyl-adenylate (-COAMP), then the persulfide sulfur on the catalytic cysteine is transferred to URM1 to form thiocarboxylation (-COSH) of its C-terminus. The reaction probably involves hydrogen sulfide that is generated from the persulfide intermediate and that acts as a nucleophile towards URM1. Subsequently, a transient disulfide bond is formed. Does not use thiosulfate as sulfur donor; NFS1 probably acting as a sulfur donor for thiocarboxylation reactions. Prior mcm(5) tRNA modification by the elongator complex is required for 2-thiolation. May also be involved in protein urmylation. The polypeptide is Adenylyltransferase and sulfurtransferase UBA4 (Saccharomyces cerevisiae (strain RM11-1a) (Baker's yeast)).